Reading from the N-terminus, the 291-residue chain is Orotidine 5'-phosphate decarboxylase (291 aa).

The active-site Proton donor is the Lys-97.

Belongs to the OMP decarboxylase family. Type 2 subfamily.

It catalyses the reaction orotidine 5'-phosphate + H(+) = UMP + CO2. The protein operates within pyrimidine metabolism; UMP biosynthesis via de novo pathway; UMP from orotate: step 2/2. This is Orotidine 5'-phosphate decarboxylase from Clostridium kluyveri (strain ATCC 8527 / DSM 555 / NBRC 12016 / NCIMB 10680 / K1).